The sequence spans 140 residues: ATP synthase epsilon chain (140 aa).

The protein belongs to the ATPase epsilon chain family. In terms of assembly, F-type ATPases have 2 components, CF(1) - the catalytic core - and CF(0) - the membrane proton channel. CF(1) has five subunits: alpha(3), beta(3), gamma(1), delta(1), epsilon(1). CF(0) has three main subunits: a, b and c.

The protein resides in the cell inner membrane. Functionally, produces ATP from ADP in the presence of a proton gradient across the membrane. The polypeptide is ATP synthase epsilon chain (Yersinia enterocolitica serotype O:8 / biotype 1B (strain NCTC 13174 / 8081)).